The following is a 329-amino-acid chain: GTP 3',8-cyclase (329 aa).

One can recognise a Radical SAM core domain in the interval Ala8–Ala234. Residue Arg17 participates in GTP binding. [4Fe-4S] cluster contacts are provided by Cys24 and Cys28. S-adenosyl-L-methionine is bound at residue Tyr30. Residue Cys31 participates in [4Fe-4S] cluster binding. Arg68 contacts GTP. An S-adenosyl-L-methionine-binding site is contributed by Gly72. Residue Thr99 participates in GTP binding. Residue Ser123 coordinates S-adenosyl-L-methionine. GTP is bound at residue Lys160. Residue Met194 coordinates S-adenosyl-L-methionine. Residues Cys257 and Cys260 each coordinate [4Fe-4S] cluster. Arg262 to Arg264 is a binding site for GTP. Cys274 provides a ligand contact to [4Fe-4S] cluster.

This sequence belongs to the radical SAM superfamily. MoaA family. As to quaternary structure, monomer and homodimer. The cofactor is [4Fe-4S] cluster.

It carries out the reaction GTP + AH2 + S-adenosyl-L-methionine = (8S)-3',8-cyclo-7,8-dihydroguanosine 5'-triphosphate + 5'-deoxyadenosine + L-methionine + A + H(+). The protein operates within cofactor biosynthesis; molybdopterin biosynthesis. In terms of biological role, catalyzes the cyclization of GTP to (8S)-3',8-cyclo-7,8-dihydroguanosine 5'-triphosphate. The sequence is that of GTP 3',8-cyclase from Pectobacterium atrosepticum (strain SCRI 1043 / ATCC BAA-672) (Erwinia carotovora subsp. atroseptica).